Consider the following 1068-residue polypeptide: Focal adhesion kinase 1 (1068 aa).

A disordered region spans residues 1 to 26 (MAAAYLDPNLNHNPSTNAKSRLSTGM). The segment covering 10–23 (LNHNPSTNAKSRLS) has biased composition (polar residues). Residues 35-355 (RVLRVFHYFE…GYCRLVSGAS (321 aa)) form the FERM domain. Phosphotyrosine is present on residues tyrosine 403 and tyrosine 413. The region spanning 435–693 (IELGRCIGEG…ELKAQLSTIL (259 aa)) is the Protein kinase domain. ATP contacts are provided by residues 441-447 (IGEGQFG), lysine 467, and 513-515 (ELC). The Proton acceptor role is filled by aspartate 559. Phosphotyrosine; by autocatalysis is present on residues tyrosine 589 and tyrosine 590. The span at 699–710 (QQEERMRMESRR) shows a compositional bias: basic and acidic residues. 2 disordered regions span residues 699 to 750 (QQEE…QHMM) and 869 to 912 (GNQH…DGYN). Phosphotyrosine occurs at positions 874 and 941.

This sequence belongs to the protein kinase superfamily. Tyr protein kinase family. FAK subfamily. Post-translationally, phosphorylated on tyrosine residues; phosphorylated kinase is first detected during gastrulation, suggesting that tyrosine phosphorylation is developmentally regulated.

Its subcellular location is the cell junction. The protein localises to the focal adhesion. The protein resides in the cell membrane. It localises to the cytoplasm. It is found in the cytoskeleton. Its subcellular location is the cilium basal body. The catalysed reaction is L-tyrosyl-[protein] + ATP = O-phospho-L-tyrosyl-[protein] + ADP + H(+). Its function is as follows. Non-receptor protein-tyrosine kinase implicated in signaling pathways involved in cell motility, proliferation and apoptosis. Activated by tyrosine-phosphorylation in response to either integrin clustering induced by cell adhesion or antibody cross-linking, or via G-protein coupled receptor (GPCR) occupancy by ligands such as bombesin or lysophosphatidic acid, or via LDL receptor occupancy. Microtubule-induced dephosphorylation at Tyr-397 is crucial for the induction of focal adhesion disassembly. The sequence is that of Focal adhesion kinase 1 (ptk2) from Xenopus laevis (African clawed frog).